A 257-amino-acid chain; its full sequence is 4-chloro-allylglycine synthase (257 aa).

Residues glutamate 112, histidine 119, glutamate 173, histidine 203, glutamate 207, and histidine 210 each coordinate Fe cation.

It depends on Fe(2+) as a cofactor.

The catalysed reaction is 4-chloro-L-lysine + AH2 + O2 = L-2-amino-4-chloropent-4-enoate + formaldehyde + A + NH4(+) + H2O. Its pathway is amino-acid metabolism. The protein operates within antibiotic biosynthesis. Functionally, involved in the biosynthesis of terminal alkyne-containing amino acids such as L-propargylglycine (Pra) and L-beta-ethynylserine, that are produced as antibiotics by S.cattleya. Catalyzes an oxidative C-C bond cleavage in 4-chloro-L-lysine to form 4-chloro-allyl-L-glycine (also named L-2-amino-4-chloropent-4-enoate), with release of formaldehyde and ammonia. Is also able to react with L-lysine directly to produce allylglycine in vitro. The protein is 4-chloro-allylglycine synthase of Streptantibioticus cattleyicolor (strain ATCC 35852 / DSM 46488 / JCM 4925 / NBRC 14057 / NRRL 8057) (Streptomyces cattleya).